A 282-amino-acid polypeptide reads, in one-letter code: E3 ubiquitin-protein ligase SIAH1B (282 aa).

Positions 1-17 (MSRQAATALSTGTSKCP) are enriched in polar residues. The segment at 1–23 (MSRQAATALSTGTSKCPPSQRVP) is disordered. Ser19 carries the phosphoserine; by ATM and ATR modification. The RING-type zinc-finger motif lies at 41-76 (CPVCFDYVLPPILQCQSGHLVCSNCRPKLTCCPTCR). Residues 90–282 (VANSVLFPCK…LGINVTISMC (193 aa)) are SBD. An SIAH-type zinc finger spans residues 93–153 (SVLFPCKYSA…VMPHLMHQHK (61 aa)). Residues Cys98, Cys105, His117, Cys121, Cys128, Cys135, His147, and His152 each coordinate Zn(2+).

The protein belongs to the SINA (Seven in absentia) family. Homodimer. In terms of processing, phosphorylated on Ser-19 by ATM and ATR. In terms of tissue distribution, widely expressed at low level in embryos and adults. Due to the high similarity between SIAH1A and SIAH1B, it is difficult to distinguish its own tissue specificity. Overexpressed in endothelial cells of adult lung.

Its subcellular location is the cytoplasm. It is found in the nucleus. The enzyme catalyses S-ubiquitinyl-[E2 ubiquitin-conjugating enzyme]-L-cysteine + [acceptor protein]-L-lysine = [E2 ubiquitin-conjugating enzyme]-L-cysteine + N(6)-ubiquitinyl-[acceptor protein]-L-lysine.. The protein operates within protein modification; protein ubiquitination. In terms of biological role, E3 ubiquitin-protein ligase that mediates ubiquitination and subsequent proteasomal degradation of target proteins. E3 ubiquitin ligases accept ubiquitin from an E2 ubiquitin-conjugating enzyme in the form of a thioester and then directly transfers the ubiquitin to targeted substrates. Mediates E3 ubiquitin ligase activity either through direct binding to substrates or by functioning as the essential RING domain subunit of larger E3 complexes. This is E3 ubiquitin-protein ligase SIAH1B (Siah1b) from Mus musculus (Mouse).